The primary structure comprises 438 residues: MKIMFLGNDTVEIKDGRFFIDGYDAIELAEKFGTPLYVMSEEQIKINYNRYIEAFKRWEEETGKEFIVAYAYKANANLAITRLLAKLGCGADVVSGGELYIAKLSNVPSKKIVFNGNCKTKEEIIMGIEANIRAFNVDSISELILINETAKELGETANVAFRINPNVNPKTHPKISTGLKKNKFGLDVESGIAMKAIKMALEMEYVNVVGVHCHIGSQLTDISPFIEETRKVMDFVVELKEEGIEIEDVNLGGGLGIPYYKDKQIPTQKDLADAIINTMLKYKDKVEMPNLILEPGRSLVATAGYLLGKVHHIKETPVTKWVMIDAGMNDMMRPAMYEAYHHIINCKVKNEKEVVSIAGGLCESSDVFGRDRELDKVEVGDVLAIFDVGAYGISMANNYNARGRPRMVLTSKKGVFLIRERETYADLIAKDIVPPHLL.

Lys-73 carries the post-translational modification N6-(pyridoxal phosphate)lysine. Pyridoxal 5'-phosphate-binding positions include Ser-217, Gly-254, and 294 to 297; that span reads EPGR. Residues Arg-297, Arg-333, and Tyr-337 each contribute to the substrate site. Residue Cys-362 is the Proton donor of the active site. Glu-363 and Tyr-391 together coordinate substrate. Residue Tyr-391 coordinates pyridoxal 5'-phosphate.

It belongs to the Orn/Lys/Arg decarboxylase class-II family. LysA subfamily. In terms of assembly, homodimer. Pyridoxal 5'-phosphate is required as a cofactor.

The enzyme catalyses meso-2,6-diaminopimelate + H(+) = L-lysine + CO2. The protein operates within amino-acid biosynthesis; L-lysine biosynthesis via DAP pathway; L-lysine from DL-2,6-diaminopimelate: step 1/1. Competitively inhibited by the substrate analog azelaic acid in vitro but not in vivo. Functionally, specifically catalyzes the decarboxylation of meso-diaminopimelate (meso-DAP) to L-lysine. This Methanocaldococcus jannaschii (strain ATCC 43067 / DSM 2661 / JAL-1 / JCM 10045 / NBRC 100440) (Methanococcus jannaschii) protein is Diaminopimelate decarboxylase.